A 418-amino-acid chain; its full sequence is Inner capsid protein sigma-2 (418 aa).

Belongs to the orthoreovirus sigma-1 protein family. Interacts with protein mu-NS; in viral inclusions.

Its subcellular location is the virion. Functionally, inner capsid (core) component. The chain is Inner capsid protein sigma-2 (S2) from Mammalia (T1L).